A 95-amino-acid chain; its full sequence is MTSSLVIYIFLWSRLICQIFPCERPGQPFAYHILGEAKKKKNRKRENRTCSIGNTCTQTYTYTPYAKKARQQEKLWERRNERTYGANSQQTFEHT.

A signal peptide spans 1–17; sequence MTSSLVIYIFLWSRLIC.

This is an uncharacterized protein from Saccharomyces cerevisiae (strain ATCC 204508 / S288c) (Baker's yeast).